We begin with the raw amino-acid sequence, 138 residues long: F-box protein At4g12382 (138 aa).

Positions 7-53 constitute an F-box domain; the sequence is NPSFADLPSSLIEVIMSHLALKNNIRASAACKSWYEVGVSVRVVEKH.

The chain is F-box protein At4g12382 from Arabidopsis thaliana (Mouse-ear cress).